Reading from the N-terminus, the 928-residue chain is Interphotoreceptor matrix proteoglycan 1 (928 aa).

The N-terminal stretch at 1–20 (MHLKTGLIFLAICLALQVQG) is a signal peptide. A disordered region spans residues 26 to 50 (SKTNHGEAKQLADASGSDKTERTTK). A compositionally biased stretch (basic and acidic residues) spans 29-49 (NHGEAKQLADASGSDKTERTT). Asn-143 carries N-linked (GlcNAc...) asparagine glycosylation. Over residues 164 to 182 (QERKDEISTDKTGGKKLED) the composition is skewed to basic and acidic residues. The tract at residues 164–191 (QERKDEISTDKTGGKKLEDIPSVSTGPP) is disordered. N-linked (GlcNAc...) asparagine glycans are attached at residues Asn-203 and Asn-212. An SEA 1 domain is found at 231–356 (AEQMVEFSVT…TKLTVTDLQQ (126 aa)). Disordered stretches follow at residues 441-481 (LSRE…TEDI) and 494-522 (ALVSTDSPAKPEDSYLPPPADESDSNDLI). Positions 466–477 (PSREPPHDRSPD) are enriched in basic and acidic residues. Residues 735 to 848 (KELVVFFSLR…YSLDIEPADQ (114 aa)) enclose the SEA 2 domain. Residues Asn-756 and Asn-780 are each glycosylated (N-linked (GlcNAc...) asparagine). The Heparin- and hyaluronan-binding signature appears at 785–793 (KQLEILNFR). 2 N-linked (GlcNAc...) asparagine glycosylation sites follow: Asn-794 and Asn-812.

Highly glycosylated (N- and O-linked carbohydrates and sialic acid). In terms of tissue distribution, abundantly expressed in the retina (at protein level). Localizes to the photoreceptor layer of the interphotoreceptor matrix of the retina (at protein level).

It is found in the cell projection. Its subcellular location is the cilium. It localises to the photoreceptor outer segment. The protein localises to the secreted. The protein resides in the extracellular space. It is found in the extracellular matrix. Its subcellular location is the interphotoreceptor matrix. It localises to the photoreceptor inner segment. Chondroitin sulfate-, heparin- and hyaluronan-binding protein. May serve to form a basic macromolecular scaffold comprising the insoluble interphotoreceptor matrix. The polypeptide is Interphotoreceptor matrix proteoglycan 1 (Gallus gallus (Chicken)).